The following is a 97-amino-acid chain: Cytochrome c oxidase subunit 4 isoform 1, mitochondrial (97 aa).

The transit peptide at 1–22 (MLATRVFNLIGRRAISTSVCVR) directs the protein to the mitochondrion. The residue at position 29 (K29) is an N6-acetyllysine; alternate. K29 bears the N6-succinyllysine; alternate mark. The residue at position 53 (K53) is an N6-acetyllysine. Residues S56 and S58 each carry the phosphoserine modification. At K60 the chain carries N6-acetyllysine; alternate. Residue K60 is modified to N6-succinyllysine; alternate. An N6-acetyllysine modification is found at K67.

The protein belongs to the cytochrome c oxidase IV family. Component of the cytochrome c oxidase (complex IV, CIV), a multisubunit enzyme composed of 14 subunits. The complex is composed of a catalytic core of 3 subunits MT-CO1, MT-CO2 and MT-CO3, encoded in the mitochondrial DNA, and 11 supernumerary subunits COX4I, COX5A, COX5B, COX6A, COX6B, COX6C, COX7A, COX7B, COX7C, COX8 and NDUFA4, which are encoded in the nuclear genome. The complex exists as a monomer or a dimer and forms supercomplexes (SCs) in the inner mitochondrial membrane with NADH-ubiquinone oxidoreductase (complex I, CI) and ubiquinol-cytochrome c oxidoreductase (cytochrome b-c1 complex, complex III, CIII), resulting in different assemblies (supercomplex SCI(1)III(2)IV(1) and megacomplex MCI(2)III(2)IV(2)). Interacts with PHB2; the interaction decreases in absence of SPHK2. Interacts with AFG1L. Interacts with ABCB7; this interaction allows the regulation of cellular iron homeostasis and cellular reactive oxygen species (ROS) levels in cardiomyocytes. Interacts with FLVCR2; this interaction occurs in the absence of heme and is disrupted upon heme binding. Interacts with IRGC.

The protein localises to the mitochondrion inner membrane. It functions in the pathway energy metabolism; oxidative phosphorylation. In terms of biological role, component of the cytochrome c oxidase, the last enzyme in the mitochondrial electron transport chain which drives oxidative phosphorylation. The respiratory chain contains 3 multisubunit complexes succinate dehydrogenase (complex II, CII), ubiquinol-cytochrome c oxidoreductase (cytochrome b-c1 complex, complex III, CIII) and cytochrome c oxidase (complex IV, CIV), that cooperate to transfer electrons derived from NADH and succinate to molecular oxygen, creating an electrochemical gradient over the inner membrane that drives transmembrane transport and the ATP synthase. Cytochrome c oxidase is the component of the respiratory chain that catalyzes the reduction of oxygen to water. Electrons originating from reduced cytochrome c in the intermembrane space (IMS) are transferred via the dinuclear copper A center (CU(A)) of subunit 2 and heme A of subunit 1 to the active site in subunit 1, a binuclear center (BNC) formed by heme A3 and copper B (CU(B)). The BNC reduces molecular oxygen to 2 water molecules using 4 electrons from cytochrome c in the IMS and 4 protons from the mitochondrial matrix. This chain is Cytochrome c oxidase subunit 4 isoform 1, mitochondrial (COX4I1), found in Sus scrofa (Pig).